Here is an 80-residue protein sequence, read N- to C-terminus: Dermaseptin-A5 (80 aa).

The signal sequence occupies residues 1 to 22 (MAFLKKSLFLVLFLGLVSLSIC). The propeptide occupies 23–43 (EEEKRENEDEEEQEDDEQSEM). Positions 24 to 45 (EEKRENEDEEEQEDDEQSEMKR) are disordered. Residues 30-40 (EDEEEQEDDEQ) show a composition bias toward acidic residues. The residue at position 77 (Val-77) is a Valine amide. The propeptide occupies 79–80 (EQ).

This sequence belongs to the frog skin active peptide (FSAP) family. Dermaseptin subfamily. As to expression, expressed by the skin glands.

It localises to the secreted. Possesses a potent antimicrobial activity against Gram-positive and Gram-negative bacteria. Probably acts by disturbing membrane functions with its amphipathic structure. In Agalychnis annae (Blue-sided leaf frog), this protein is Dermaseptin-A5.